Reading from the N-terminus, the 164-residue chain is 3-isopropylmalate dehydratase small subunit 1 (164 aa).

The protein belongs to the LeuD family. LeuD type 2 subfamily. In terms of assembly, heterodimer of LeuC and LeuD.

It catalyses the reaction (2R,3S)-3-isopropylmalate = (2S)-2-isopropylmalate. It functions in the pathway amino-acid biosynthesis; L-leucine biosynthesis; L-leucine from 3-methyl-2-oxobutanoate: step 2/4. In terms of biological role, catalyzes the isomerization between 2-isopropylmalate and 3-isopropylmalate, via the formation of 2-isopropylmaleate. The polypeptide is 3-isopropylmalate dehydratase small subunit 1 (leuD1) (Pyrococcus furiosus (strain ATCC 43587 / DSM 3638 / JCM 8422 / Vc1)).